The sequence spans 523 residues: 11-oxo-beta-amyrin 30-oxidase (523 aa).

The helical transmembrane segment at 9 to 29 (AIWVVLTVILAAIPIWVCHMV) threads the bilayer. Cysteine 471 is a heme binding site.

It belongs to the cytochrome P450 family. Requires heme as cofactor. Expressed in roots, stolons and stems. Not detected in leaves.

It localises to the membrane. The enzyme catalyses 11-oxo-beta-amyrin + 3 reduced [NADPH--hemoprotein reductase] + 3 O2 = glycyrrhetinate + 3 oxidized [NADPH--hemoprotein reductase] + 4 H2O + 4 H(+). It catalyses the reaction 11-oxo-beta-amyrin + reduced [NADPH--hemoprotein reductase] + O2 = 30-hydroxy-11-oxo-beta-amyrin + oxidized [NADPH--hemoprotein reductase] + H2O + H(+). It carries out the reaction 30-hydroxy-11-oxo-beta-amyrin + reduced [NADPH--hemoprotein reductase] + O2 = glycyrrhetaldehyde + oxidized [NADPH--hemoprotein reductase] + 2 H2O + H(+). The catalysed reaction is glycyrrhetaldehyde + reduced [NADPH--hemoprotein reductase] + O2 = glycyrrhetinate + oxidized [NADPH--hemoprotein reductase] + H2O + 2 H(+). Involved in the biosynthesis of Glycyrrhetinic acid (GA), a natural product which exhibits anti-inflammatory activity. Involved in the biosynthesis of the triterpenoid saponin glycyrrhizin. Catalyzes three sequential oxidation steps at C-30 of 11-oxo-beta-amyrin. Also able to catalyze C-30 monohydroxylation of beta-amyrin to produce 30-hydroxy-beta-amyrin. May be also responsible for the oxidation at positions C-22 and C-29 in addition to C-30. The chain is 11-oxo-beta-amyrin 30-oxidase from Glycyrrhiza uralensis (Chinese licorice).